The chain runs to 92 residues: DNA-binding protein HU 1 (92 aa).

T4 is modified (phosphothreonine).

It belongs to the bacterial histone-like protein family. In terms of assembly, homodimer. As to quaternary structure, (Microbial infection) Interacts with Bacillus phage SP01 Gp46; the interaction replaces dsDNA from the hbs-DNA complex.

Its subcellular location is the cytoplasm. It is found in the nucleoid. Functionally, histone-like DNA-binding protein which introduces negative supercoils in relaxed plasmid DNA in the presence of topoisomerase I. There are at least 20,000 monomers/cell. Capable of wrapping DNA to stabilize it, and thus to prevent its denaturation under extreme environmental conditions. Binds evenly across chromosome, does not display a preference for AT content. Binds ss- and dsDNA in a sequence non-specific manner; 8 nucleotides are sufficient to bind protein. In Bacillus subtilis (strain 168), this protein is DNA-binding protein HU 1.